A 529-amino-acid chain; its full sequence is Bifunctional purine biosynthesis protein PurH (529 aa).

The MGS-like domain maps to 1 to 148; the sequence is MQQRRPIRRA…KNHKDVAIVV (148 aa).

The protein belongs to the PurH family.

The catalysed reaction is (6R)-10-formyltetrahydrofolate + 5-amino-1-(5-phospho-beta-D-ribosyl)imidazole-4-carboxamide = 5-formamido-1-(5-phospho-D-ribosyl)imidazole-4-carboxamide + (6S)-5,6,7,8-tetrahydrofolate. The enzyme catalyses IMP + H2O = 5-formamido-1-(5-phospho-D-ribosyl)imidazole-4-carboxamide. Its pathway is purine metabolism; IMP biosynthesis via de novo pathway; 5-formamido-1-(5-phospho-D-ribosyl)imidazole-4-carboxamide from 5-amino-1-(5-phospho-D-ribosyl)imidazole-4-carboxamide (10-formyl THF route): step 1/1. It participates in purine metabolism; IMP biosynthesis via de novo pathway; IMP from 5-formamido-1-(5-phospho-D-ribosyl)imidazole-4-carboxamide: step 1/1. This Yersinia pseudotuberculosis serotype O:1b (strain IP 31758) protein is Bifunctional purine biosynthesis protein PurH.